A 273-amino-acid polypeptide reads, in one-letter code: NADPH-dependent 7-cyano-7-deazaguanine reductase (273 aa).

Residue 81–83 (VES) participates in substrate binding. 83–84 (SK) is a binding site for NADPH. The Thioimide intermediate role is filled by cysteine 179. Aspartate 186 functions as the Proton donor in the catalytic mechanism. A substrate-binding site is contributed by 218–219 (AE). 247 to 248 (RG) contributes to the NADPH binding site.

This sequence belongs to the GTP cyclohydrolase I family. QueF type 2 subfamily. In terms of assembly, homodimer.

The protein resides in the cytoplasm. The enzyme catalyses 7-aminomethyl-7-carbaguanine + 2 NADP(+) = 7-cyano-7-deazaguanine + 2 NADPH + 3 H(+). The protein operates within tRNA modification; tRNA-queuosine biosynthesis. Its function is as follows. Catalyzes the NADPH-dependent reduction of 7-cyano-7-deazaguanine (preQ0) to 7-aminomethyl-7-deazaguanine (preQ1). The sequence is that of NADPH-dependent 7-cyano-7-deazaguanine reductase from Rickettsia akari (strain Hartford).